We begin with the raw amino-acid sequence, 444 residues long: Methylenetetrahydrofolate--tRNA-(uracil-5-)-methyltransferase TrmFO (444 aa).

FAD is bound at residue 10-15 (GAGLAG).

The protein belongs to the MnmG family. TrmFO subfamily. FAD serves as cofactor.

The protein localises to the cytoplasm. It catalyses the reaction uridine(54) in tRNA + (6R)-5,10-methylene-5,6,7,8-tetrahydrofolate + NADH + H(+) = 5-methyluridine(54) in tRNA + (6S)-5,6,7,8-tetrahydrofolate + NAD(+). It carries out the reaction uridine(54) in tRNA + (6R)-5,10-methylene-5,6,7,8-tetrahydrofolate + NADPH + H(+) = 5-methyluridine(54) in tRNA + (6S)-5,6,7,8-tetrahydrofolate + NADP(+). In terms of biological role, catalyzes the folate-dependent formation of 5-methyl-uridine at position 54 (M-5-U54) in all tRNAs. The protein is Methylenetetrahydrofolate--tRNA-(uracil-5-)-methyltransferase TrmFO of Streptococcus pneumoniae (strain Taiwan19F-14).